A 541-amino-acid chain; its full sequence is Chaperonin GroEL 1 (541 aa).

ATP is bound by residues 29–32 (TLGP), 86–90 (DGTTT), Gly413, 478–480 (NAA), and Asp494. Residues 520-541 (VVEKPAEAEDDGHGHGHGHHHH) form a disordered region. The span at 523–533 (KPAEAEDDGHG) shows a compositional bias: basic and acidic residues.

The protein belongs to the chaperonin (HSP60) family. Forms a cylinder of 14 subunits composed of two heptameric rings stacked back-to-back. Interacts with the co-chaperonin GroES.

The protein localises to the cytoplasm. It carries out the reaction ATP + H2O + a folded polypeptide = ADP + phosphate + an unfolded polypeptide.. Functionally, together with its co-chaperonin GroES, plays an essential role in assisting protein folding. The GroEL-GroES system forms a nano-cage that allows encapsulation of the non-native substrate proteins and provides a physical environment optimized to promote and accelerate protein folding. The protein is Chaperonin GroEL 1 of Mycolicibacterium gilvum (strain PYR-GCK) (Mycobacterium gilvum (strain PYR-GCK)).